A 147-amino-acid chain; its full sequence is Small ribosomal subunit protein uS12 (147 aa).

Belongs to the universal ribosomal protein uS12 family. Part of the 30S ribosomal subunit.

With S4 and S5 plays an important role in translational accuracy. Located at the interface of the 30S and 50S subunits. The chain is Small ribosomal subunit protein uS12 from Pyrobaculum arsenaticum (strain DSM 13514 / JCM 11321 / PZ6).